Consider the following 322-residue polypeptide: Phosphatidylserine decarboxylase proenzyme (322 aa).

Active-site charge relay system; for autoendoproteolytic cleavage activity residues include Asp-90, His-147, and Ser-254. Residue Ser-254 is the Schiff-base intermediate with substrate; via pyruvic acid; for decarboxylase activity of the active site. At Ser-254 the chain carries Pyruvic acid (Ser); by autocatalysis. The interval 294–322 (EVEPVPLPEEEIKAEHDASPLVDDKKDET) is disordered. The segment covering 303-322 (EEIKAEHDASPLVDDKKDET) has biased composition (basic and acidic residues).

Belongs to the phosphatidylserine decarboxylase family. PSD-B subfamily. Prokaryotic type I sub-subfamily. Heterodimer of a large membrane-associated beta subunit and a small pyruvoyl-containing alpha subunit. Pyruvate is required as a cofactor. Post-translationally, is synthesized initially as an inactive proenzyme. Formation of the active enzyme involves a self-maturation process in which the active site pyruvoyl group is generated from an internal serine residue via an autocatalytic post-translational modification. Two non-identical subunits are generated from the proenzyme in this reaction, and the pyruvate is formed at the N-terminus of the alpha chain, which is derived from the carboxyl end of the proenzyme. The autoendoproteolytic cleavage occurs by a canonical serine protease mechanism, in which the side chain hydroxyl group of the serine supplies its oxygen atom to form the C-terminus of the beta chain, while the remainder of the serine residue undergoes an oxidative deamination to produce ammonia and the pyruvoyl prosthetic group on the alpha chain. During this reaction, the Ser that is part of the protease active site of the proenzyme becomes the pyruvoyl prosthetic group, which constitutes an essential element of the active site of the mature decarboxylase.

It is found in the cell membrane. It catalyses the reaction a 1,2-diacyl-sn-glycero-3-phospho-L-serine + H(+) = a 1,2-diacyl-sn-glycero-3-phosphoethanolamine + CO2. It participates in phospholipid metabolism; phosphatidylethanolamine biosynthesis; phosphatidylethanolamine from CDP-diacylglycerol: step 2/2. Its function is as follows. Catalyzes the formation of phosphatidylethanolamine (PtdEtn) from phosphatidylserine (PtdSer). This Salmonella arizonae (strain ATCC BAA-731 / CDC346-86 / RSK2980) protein is Phosphatidylserine decarboxylase proenzyme.